We begin with the raw amino-acid sequence, 176 residues long: Large ribosomal subunit protein uL22 (176 aa).

The disordered stretch occupies residues 113 to 176 (VVESRPSKDQ…ETSEAKGGSD (64 aa)). Positions 136 to 152 (SKAAATAPAKKSSASKA) are enriched in low complexity. The segment covering 159–176 (TKAESKTSETSEAKGGSD) has biased composition (basic and acidic residues).

This sequence belongs to the universal ribosomal protein uL22 family. As to quaternary structure, part of the 50S ribosomal subunit.

This protein binds specifically to 23S rRNA; its binding is stimulated by other ribosomal proteins, e.g. L4, L17, and L20. It is important during the early stages of 50S assembly. It makes multiple contacts with different domains of the 23S rRNA in the assembled 50S subunit and ribosome. Its function is as follows. The globular domain of the protein is located near the polypeptide exit tunnel on the outside of the subunit, while an extended beta-hairpin is found that lines the wall of the exit tunnel in the center of the 70S ribosome. This Mycobacterium marinum (strain ATCC BAA-535 / M) protein is Large ribosomal subunit protein uL22.